Consider the following 361-residue polypeptide: Divinyl chlorophyll a/b light-harvesting protein PcbE (361 aa).

Transmembrane regions (helical) follow at residues 27-47 (FIGS…ANTL), 88-108 (VAFV…AGLL), 149-169 (FILG…VEWA), 210-230 (VMGG…FHIA), 250-270 (AVLS…AFWC), and 315-335 (LSNV…WHAI).

This sequence belongs to the PsbB/PsbC family. IsiA/Pcb subfamily. In terms of assembly, the antenna complex consists of divinyl chlorophylls (a and b) and divinyl chlorophyll a/b binding proteins and binds more divinyl chlorophyll b than does the antenna complex from high-light-adapted Prochlorococcus. Requires divinyl chlorophyll a as cofactor. It depends on divinyl chlorophyll b as a cofactor.

The protein localises to the cellular thylakoid membrane. The antenna complex functions as a light receptor, it captures and delivers excitation energy to photosystems II and I. The Prochlorales pcb genes are not related to higher plant LHCs. This is Divinyl chlorophyll a/b light-harvesting protein PcbE (pcbE) from Prochlorococcus marinus (strain SARG / CCMP1375 / SS120).